The chain runs to 174 residues: Ribosome maturation factor RimM (174 aa).

The PRC barrel domain occupies 91–164 (DDAWYPHQLQ…KVVLSPPGGL (74 aa)).

Belongs to the RimM family. Binds ribosomal protein uS19.

It localises to the cytoplasm. In terms of biological role, an accessory protein needed during the final step in the assembly of 30S ribosomal subunit, possibly for assembly of the head region. Essential for efficient processing of 16S rRNA. May be needed both before and after RbfA during the maturation of 16S rRNA. It has affinity for free ribosomal 30S subunits but not for 70S ribosomes. The chain is Ribosome maturation factor RimM from Kineococcus radiotolerans (strain ATCC BAA-149 / DSM 14245 / SRS30216).